The sequence spans 238 residues: Ribonuclease PH (238 aa).

Residues Arg-86 and 124–126 (GTR) contribute to the phosphate site.

This sequence belongs to the RNase PH family. As to quaternary structure, homohexameric ring arranged as a trimer of dimers.

It catalyses the reaction tRNA(n+1) + phosphate = tRNA(n) + a ribonucleoside 5'-diphosphate. Functionally, phosphorolytic 3'-5' exoribonuclease that plays an important role in tRNA 3'-end maturation. Removes nucleotide residues following the 3'-CCA terminus of tRNAs; can also add nucleotides to the ends of RNA molecules by using nucleoside diphosphates as substrates, but this may not be physiologically important. Probably plays a role in initiation of 16S rRNA degradation (leading to ribosome degradation) during starvation. In Escherichia coli O6:K15:H31 (strain 536 / UPEC), this protein is Ribonuclease PH.